We begin with the raw amino-acid sequence, 132 residues long: Fatty acid-binding protein type 2 (132 aa).

Ala2 is modified (N-acetylalanine).

This sequence belongs to the calycin superfamily. Fatty-acid binding protein (FABP) family.

This is Fatty acid-binding protein type 2 from Fasciola hepatica (Liver fluke).